The following is an 842-amino-acid chain: Glucans biosynthesis glucosyltransferase H (842 aa).

Helical transmembrane passes span 141–161 (LLLL…TILP), 194–214 (ILLL…TALM), 513–533 (VFLT…FLAL), 570–590 (LFAS…ILIW), 615–635 (VLLA…AFLG), and 680–700 (FLFW…VSVI).

This sequence belongs to the glycosyltransferase 2 family. OpgH subfamily.

It localises to the cell inner membrane. It functions in the pathway glycan metabolism; osmoregulated periplasmic glucan (OPG) biosynthesis. In terms of biological role, involved in the biosynthesis of osmoregulated periplasmic glucans (OPGs). In Enterobacter sp. (strain 638), this protein is Glucans biosynthesis glucosyltransferase H.